Reading from the N-terminus, the 49-residue chain is Large ribosomal subunit protein bL33A (49 aa).

This sequence belongs to the bacterial ribosomal protein bL33 family.

This Streptococcus pneumoniae (strain Hungary19A-6) protein is Large ribosomal subunit protein bL33A.